We begin with the raw amino-acid sequence, 192 residues long: Fe/S biogenesis protein NfuA (192 aa).

Positions 149 and 152 each coordinate [4Fe-4S] cluster.

This sequence belongs to the NfuA family. In terms of assembly, homodimer. Requires [4Fe-4S] cluster as cofactor.

Its function is as follows. Involved in iron-sulfur cluster biogenesis. Binds a 4Fe-4S cluster, can transfer this cluster to apoproteins, and thereby intervenes in the maturation of Fe/S proteins. Could also act as a scaffold/chaperone for damaged Fe/S proteins. The protein is Fe/S biogenesis protein NfuA of Aeromonas salmonicida (strain A449).